The following is a 176-amino-acid chain: Flavodoxin (176 aa).

One can recognise a Flavodoxin-like domain in the interval I4 to A165.

The protein belongs to the flavodoxin family. FMN is required as a cofactor.

Functionally, low-potential electron donor to a number of redox enzymes. The protein is Flavodoxin (fldA) of Klebsiella pneumoniae.